A 162-amino-acid polypeptide reads, in one-letter code: Small ribosomal subunit protein uS9 (162 aa).

Belongs to the universal ribosomal protein uS9 family.

In Parvibaculum lavamentivorans (strain DS-1 / DSM 13023 / NCIMB 13966), this protein is Small ribosomal subunit protein uS9.